A 346-amino-acid chain; its full sequence is Uroporphyrinogen decarboxylase (346 aa).

Substrate-binding positions include 23-27 (RQAGR), aspartate 72, tyrosine 155, serine 209, and histidine 322.

Belongs to the uroporphyrinogen decarboxylase family. In terms of assembly, homodimer.

It is found in the cytoplasm. The enzyme catalyses uroporphyrinogen III + 4 H(+) = coproporphyrinogen III + 4 CO2. It functions in the pathway porphyrin-containing compound metabolism; protoporphyrin-IX biosynthesis; coproporphyrinogen-III from 5-aminolevulinate: step 4/4. Its function is as follows. Catalyzes the decarboxylation of four acetate groups of uroporphyrinogen-III to yield coproporphyrinogen-III. The polypeptide is Uroporphyrinogen decarboxylase (Anaeromyxobacter sp. (strain Fw109-5)).